The following is a 179-amino-acid chain: tRNA-splicing endonuclease (179 aa).

Residues tyrosine 115, histidine 125, and lysine 156 contribute to the active site.

The protein belongs to the tRNA-intron endonuclease family. Archaeal short subfamily. Homotetramer; although the tetramer contains four active sites, only two participate in the cleavage. Therefore, it should be considered as a dimer of dimers.

The enzyme catalyses pretRNA = a 3'-half-tRNA molecule with a 5'-OH end + a 5'-half-tRNA molecule with a 2',3'-cyclic phosphate end + an intron with a 2',3'-cyclic phosphate and a 5'-hydroxyl terminus.. In terms of biological role, endonuclease that removes tRNA introns. Cleaves pre-tRNA at the 5'- and 3'-splice sites to release the intron. The products are an intron and two tRNA half-molecules bearing 2',3' cyclic phosphate and 5'-OH termini. Recognizes a pseudosymmetric substrate in which 2 bulged loops of 3 bases are separated by a stem of 4 bp. The polypeptide is tRNA-splicing endonuclease (endA) (Methanocaldococcus jannaschii (strain ATCC 43067 / DSM 2661 / JAL-1 / JCM 10045 / NBRC 100440) (Methanococcus jannaschii)).